Reading from the N-terminus, the 365-residue chain is UDP-N-acetylglucosamine--N-acetylmuramyl-(pentapeptide) pyrophosphoryl-undecaprenol N-acetylglucosamine transferase (365 aa).

Residues 20–22 (TGG), Asn-132, Arg-168, Ser-196, Ile-253, and Gln-298 contribute to the UDP-N-acetyl-alpha-D-glucosamine site.

Belongs to the glycosyltransferase 28 family. MurG subfamily.

Its subcellular location is the cell inner membrane. The enzyme catalyses di-trans,octa-cis-undecaprenyl diphospho-N-acetyl-alpha-D-muramoyl-L-alanyl-D-glutamyl-meso-2,6-diaminopimeloyl-D-alanyl-D-alanine + UDP-N-acetyl-alpha-D-glucosamine = di-trans,octa-cis-undecaprenyl diphospho-[N-acetyl-alpha-D-glucosaminyl-(1-&gt;4)]-N-acetyl-alpha-D-muramoyl-L-alanyl-D-glutamyl-meso-2,6-diaminopimeloyl-D-alanyl-D-alanine + UDP + H(+). It participates in cell wall biogenesis; peptidoglycan biosynthesis. Functionally, cell wall formation. Catalyzes the transfer of a GlcNAc subunit on undecaprenyl-pyrophosphoryl-MurNAc-pentapeptide (lipid intermediate I) to form undecaprenyl-pyrophosphoryl-MurNAc-(pentapeptide)GlcNAc (lipid intermediate II). This is UDP-N-acetylglucosamine--N-acetylmuramyl-(pentapeptide) pyrophosphoryl-undecaprenol N-acetylglucosamine transferase from Ralstonia nicotianae (strain ATCC BAA-1114 / GMI1000) (Ralstonia solanacearum).